A 379-amino-acid polypeptide reads, in one-letter code: Chaperone protein DnaJ (379 aa).

One can recognise a J domain in the interval 5–69; it reads EFYDRLGVSK…QKRAAYDQYG (65 aa). The CR-type zinc-finger motif lies at 135-217; it reads GAEKEVSYNR…CHGTGHEKKT (83 aa). Zn(2+) contacts are provided by Cys-148, Cys-151, Cys-165, Cys-168, Cys-191, Cys-194, Cys-205, and Cys-208. 4 CXXCXGXG motif repeats span residues 148-155, 165-172, 191-198, and 205-212; these read CHTCSGSG, CQKCHGSG, CDVCQGSG, and CPTCHGTG.

This sequence belongs to the DnaJ family. Homodimer. Zn(2+) serves as cofactor.

It is found in the cytoplasm. In terms of biological role, participates actively in the response to hyperosmotic and heat shock by preventing the aggregation of stress-denatured proteins and by disaggregating proteins, also in an autonomous, DnaK-independent fashion. Unfolded proteins bind initially to DnaJ; upon interaction with the DnaJ-bound protein, DnaK hydrolyzes its bound ATP, resulting in the formation of a stable complex. GrpE releases ADP from DnaK; ATP binding to DnaK triggers the release of the substrate protein, thus completing the reaction cycle. Several rounds of ATP-dependent interactions between DnaJ, DnaK and GrpE are required for fully efficient folding. Also involved, together with DnaK and GrpE, in the DNA replication of plasmids through activation of initiation proteins. The polypeptide is Chaperone protein DnaJ (Streptococcus agalactiae serotype V (strain ATCC BAA-611 / 2603 V/R)).